The following is a 285-amino-acid chain: Probable endonuclease 4 (285 aa).

Zn(2+) is bound by residues His-67, His-107, Glu-144, Asp-177, His-180, His-214, Asp-227, His-229, and Glu-259.

The protein belongs to the AP endonuclease 2 family. The cofactor is Zn(2+).

It carries out the reaction Endonucleolytic cleavage to 5'-phosphooligonucleotide end-products.. Functionally, endonuclease IV plays a role in DNA repair. It cleaves phosphodiester bonds at apurinic or apyrimidinic (AP) sites, generating a 3'-hydroxyl group and a 5'-terminal sugar phosphate. This chain is Probable endonuclease 4, found in Persephonella marina (strain DSM 14350 / EX-H1).